Reading from the N-terminus, the 1221-residue chain is DNA replication helicase (1221 aa).

A Nuclear localization signal motif is present at residues 692–701; that stretch reads PKCKCYKKIK. 917-924 lines the ATP pocket; it reads GEPGSGKS. Positions 967–981 form a DNA-binding region, H-T-H motif; sequence INELKQCSESYFKKH.

Interacts with IE1 and LEF-3.

The protein resides in the host nucleus. It catalyses the reaction ATP + H2O = ADP + phosphate + H(+). Its function is as follows. Essential for initiation of viral DNA replication, it may contribute to other functions such as controlling the switch to the late phase and leading to the inhibition of host protein synthesis. Required for late and very late gene expression. This Lepidoptera (butterflies and moths) protein is DNA replication helicase (HELI).